The sequence spans 445 residues: IYRKHLKYIGATSPGELCNESYVAGVGTYPEDIGLEGLSMVITQLIGLHIGLTYDDVDNCSCPRAPCIMQPEALSSSGMKTFSNCSVHDYTHYASKLDMQCLGDLSNVLQPKQSVCGNGIVEGSEECDCGNETECQFKECCNHETCKLKGSAQCGSGTCCTPKCELSAAGTPCRKAVDPECDFTEYCDGSSSHCVPDTFALDGHLCRLGSAYCYNGRCQALNDQCVSLFGKGSQGASYACFEKVNSQRENLANCDSKNSYSLPCGQKDVLCGKLACFRPNKNYKSSTQSVLYSYVHGSVCLSIPPGLSMRSDGKDNAYVADGTVCGPQMYCINGSCKEVNFTGNDCNAAKKCKGNGICNNFGHCQCFPDYRPPDCNLQIGSPGGSIDDGNLLRTDSALATKRLSQHADSWVILGFFIFLPFIMTLFLGIIKRNERKIVPQKEQER.

The 106-residue stretch at 1-106 (IYRKHLKYIG…LDMQCLGDLS (106 aa)) folds into the Peptidase M12B domain. Residues 1 to 409 (IYRKHLKYIG…TKRLSQHADS (409 aa)) lie on the Extracellular side of the membrane. Disulfide bonds link Cys18/Cys101, Cys60/Cys85, and Cys62/Cys67. N-linked (GlcNAc...) asparagine glycosylation is found at Asn19 and Asn59. 2 N-linked (GlcNAc...) asparagine glycosylation sites follow: Asn84 and Asn131. One can recognise a Disintegrin domain in the interval 113 to 202 (QSVCGNGIVE…HCVPDTFALD (90 aa)). Cysteines 173 and 194 form a disulfide. 2 N-linked (GlcNAc...) asparagine glycosylation sites follow: Asn333 and Asn340. Residues 342 to 376 (TGNDCNAAKKCKGNGICNNFGHCQCFPDYRPPDCN) form the EGF-like domain. Cystine bridges form between Cys346/Cys358, Cys352/Cys364, and Cys366/Cys375. A helical transmembrane segment spans residues 410 to 430 (WVILGFFIFLPFIMTLFLGII). Residues 431 to 445 (KRNERKIVPQKEQER) lie on the Cytoplasmic side of the membrane.

Post-translationally, the prodomain and the metalloprotease-like domain are cleaved during the epididymal maturation of the spermatozoa. As to expression, expressed specifically in testis.

Its subcellular location is the membrane. In terms of biological role, sperm surface membrane protein that may be involved in spermatogenesis and fertilization. This is a non catalytic metalloprotease-like protein. This Rattus norvegicus (Rat) protein is Disintegrin and metalloproteinase domain-containing protein 18 (Adam18).